Here is a 217-residue protein sequence, read N- to C-terminus: Peptide deformylase 1 (217 aa).

Fe cation contacts are provided by C129 and H171. E172 is an active-site residue. H175 contributes to the Fe cation binding site.

Belongs to the polypeptide deformylase family. It depends on Fe(2+) as a cofactor.

It catalyses the reaction N-terminal N-formyl-L-methionyl-[peptide] + H2O = N-terminal L-methionyl-[peptide] + formate. Functionally, removes the formyl group from the N-terminal Met of newly synthesized proteins. Requires at least a dipeptide for an efficient rate of reaction. N-terminal L-methionine is a prerequisite for activity but the enzyme has broad specificity at other positions. The chain is Peptide deformylase 1 from Bifidobacterium longum (strain NCC 2705).